We begin with the raw amino-acid sequence, 754 residues long: 5-methyltetrahydropteroyltriglutamate--homocysteine methyltransferase (754 aa).

5-methyltetrahydropteroyltri-L-glutamate is bound by residues 17–20 (RELK) and Lys-117. L-homocysteine is bound by residues 431–433 (IGS) and Glu-484. L-methionine is bound by residues 431-433 (IGS) and Glu-484. Residues 515–516 (RC) and Trp-561 contribute to the 5-methyltetrahydropteroyltri-L-glutamate site. Asp-599 contributes to the L-homocysteine binding site. Asp-599 provides a ligand contact to L-methionine. Position 605 (Glu-605) interacts with 5-methyltetrahydropteroyltri-L-glutamate. Positions 641, 643, and 665 each coordinate Zn(2+). His-694 (proton donor) is an active-site residue. Cys-726 is a binding site for Zn(2+).

This sequence belongs to the vitamin-B12 independent methionine synthase family. Zn(2+) is required as a cofactor.

It catalyses the reaction 5-methyltetrahydropteroyltri-L-glutamate + L-homocysteine = tetrahydropteroyltri-L-glutamate + L-methionine. The protein operates within amino-acid biosynthesis; L-methionine biosynthesis via de novo pathway; L-methionine from L-homocysteine (MetE route): step 1/1. Catalyzes the transfer of a methyl group from 5-methyltetrahydrofolate to homocysteine resulting in methionine formation. The protein is 5-methyltetrahydropteroyltriglutamate--homocysteine methyltransferase of Salmonella enteritidis PT4 (strain P125109).